Here is a 399-residue protein sequence, read N- to C-terminus: Bifunctional enzyme IspD/IspF (399 aa).

The interval 1-235 is 2-C-methyl-D-erythritol 4-phosphate cytidylyltransferase; it reads METWALILAA…MVEQPKTTVP (235 aa). The 2-C-methyl-D-erythritol 2,4-cyclodiphosphate synthase stretch occupies residues 236-399; the sequence is IVGYGYDVHK…IVIVTAIRIS (164 aa). Asp242 and His244 together coordinate a divalent metal cation. 4-CDP-2-C-methyl-D-erythritol 2-phosphate contacts are provided by residues 242 to 244 and 275 to 276; these read DVH and HS. His283 serves as a coordination point for a divalent metal cation. Residues 297–299, 302–306, 373–376, and Phe380 contribute to the 4-CDP-2-C-methyl-D-erythritol 2-phosphate site; these read DIG, FPDSD, and TTEE.

The protein in the N-terminal section; belongs to the IspD/TarI cytidylyltransferase family. IspD subfamily. In the C-terminal section; belongs to the IspF family. A divalent metal cation is required as a cofactor.

It catalyses the reaction 2-C-methyl-D-erythritol 4-phosphate + CTP + H(+) = 4-CDP-2-C-methyl-D-erythritol + diphosphate. The enzyme catalyses 4-CDP-2-C-methyl-D-erythritol 2-phosphate = 2-C-methyl-D-erythritol 2,4-cyclic diphosphate + CMP. It participates in isoprenoid biosynthesis; isopentenyl diphosphate biosynthesis via DXP pathway; isopentenyl diphosphate from 1-deoxy-D-xylulose 5-phosphate: step 2/6. The protein operates within isoprenoid biosynthesis; isopentenyl diphosphate biosynthesis via DXP pathway; isopentenyl diphosphate from 1-deoxy-D-xylulose 5-phosphate: step 4/6. Functionally, bifunctional enzyme that catalyzes the formation of 4-diphosphocytidyl-2-C-methyl-D-erythritol from CTP and 2-C-methyl-D-erythritol 4-phosphate (MEP) (IspD), and catalyzes the conversion of 4-diphosphocytidyl-2-C-methyl-D-erythritol 2-phosphate (CDP-ME2P) to 2-C-methyl-D-erythritol 2,4-cyclodiphosphate (ME-CPP) with a corresponding release of cytidine 5-monophosphate (CMP) (IspF). In Lawsonia intracellularis (strain PHE/MN1-00), this protein is Bifunctional enzyme IspD/IspF.